Consider the following 302-residue polypeptide: D-alanine--D-alanine ligase B (302 aa).

Residues 99–294 (KKVLKAENIR…YSKFIDLIIE (196 aa)) enclose the ATP-grasp domain. 126–181 (IEEIGYPVFVKPNNGGSSVATFKVYKKEDIKNSVMEGLKYDEEVIIESFIKGREIT) contacts ATP. Mg(2+)-binding residues include aspartate 248, glutamate 261, and asparagine 263.

It belongs to the D-alanine--D-alanine ligase family. It depends on Mg(2+) as a cofactor. Mn(2+) is required as a cofactor.

It is found in the cytoplasm. It catalyses the reaction 2 D-alanine + ATP = D-alanyl-D-alanine + ADP + phosphate + H(+). The protein operates within cell wall biogenesis; peptidoglycan biosynthesis. Functionally, cell wall formation. The protein is D-alanine--D-alanine ligase B of Clostridium perfringens (strain 13 / Type A).